A 339-amino-acid polypeptide reads, in one-letter code: Fructose-1,6-bisphosphatase class 1 (339 aa).

4 residues coordinate Mg(2+): glutamate 92, aspartate 114, leucine 116, and aspartate 117. Substrate contacts are provided by residues 117–120 (DGSS), asparagine 209, and lysine 275. Glutamate 281 lines the Mg(2+) pocket.

It belongs to the FBPase class 1 family. In terms of assembly, homotetramer. Requires Mg(2+) as cofactor.

The protein resides in the cytoplasm. The enzyme catalyses beta-D-fructose 1,6-bisphosphate + H2O = beta-D-fructose 6-phosphate + phosphate. Its pathway is carbohydrate biosynthesis; gluconeogenesis. The polypeptide is Fructose-1,6-bisphosphatase class 1 (Acidithiobacillus ferrooxidans (strain ATCC 53993 / BNL-5-31) (Leptospirillum ferrooxidans (ATCC 53993))).